The sequence spans 387 residues: Succinate--CoA ligase [ADP-forming] subunit beta (387 aa).

Residues 9 to 245 (KDLLESYGLK…KSQENAKELK (237 aa)) enclose the ATP-grasp domain. ATP-binding positions include lysine 46, 53–55 (GRG), glutamate 100, tyrosine 103, and glutamate 108. Mg(2+) is bound by residues asparagine 200 and aspartate 214. Residues asparagine 265 and 322 to 324 (GIV) contribute to the substrate site.

The protein belongs to the succinate/malate CoA ligase beta subunit family. In terms of assembly, heterotetramer of two alpha and two beta subunits. It depends on Mg(2+) as a cofactor.

It catalyses the reaction succinate + ATP + CoA = succinyl-CoA + ADP + phosphate. The catalysed reaction is GTP + succinate + CoA = succinyl-CoA + GDP + phosphate. Its pathway is carbohydrate metabolism; tricarboxylic acid cycle; succinate from succinyl-CoA (ligase route): step 1/1. Succinyl-CoA synthetase functions in the citric acid cycle (TCA), coupling the hydrolysis of succinyl-CoA to the synthesis of either ATP or GTP and thus represents the only step of substrate-level phosphorylation in the TCA. The beta subunit provides nucleotide specificity of the enzyme and binds the substrate succinate, while the binding sites for coenzyme A and phosphate are found in the alpha subunit. The chain is Succinate--CoA ligase [ADP-forming] subunit beta from Francisella tularensis subsp. holarctica (strain OSU18).